A 1239-amino-acid polypeptide reads, in one-letter code: Inner tegument protein (1239 aa).

Disordered regions lie at residues 1 to 20 (MASA…DAQP), 669 to 704 (GESP…GGGP), 959 to 980 (RPPP…DTPP), and 1087 to 1239 (GRNA…AEDE). The tract at residues 615–1239 (NELPKTRSLA…RPPRPTAEDE (625 aa)) is interaction with large tegument protein. Residues 1112–1123 (DSSPFSFSSSDF) show a composition bias toward low complexity. Gly residues predominate over residues 1139-1148 (VPGGGGGGEG). The span at 1151–1170 (EEERERPSDIDTAARARKVE) shows a compositional bias: basic and acidic residues. The span at 1180 to 1189 (RTTPSPSRRA) shows a compositional bias: low complexity. Over residues 1219-1232 (VRPRTRRGATRRPP) the composition is skewed to basic residues.

Belongs to the herpesviridae inner tegument protein family. In terms of assembly, interacts (via C-terminus) with the large tegument protein/LTP (via N-terminus).

Its subcellular location is the virion tegument. It localises to the host cytoplasm. It is found in the host nucleus. The protein resides in the host Golgi apparatus. The protein localises to the host trans-Golgi network. Its function is as follows. Plays an essential role in cytoplasmic secondary envelopment during viral egress. Interacts with the capsid via the large tegument protein/LTP and participates in its transport to the host trans-Golgi network (TGN) where secondary envelopment occurs. Modulates tegumentation and capsid accumulation at the viral assembly complex. This Homo sapiens (Human) protein is Inner tegument protein.